The following is a 117-amino-acid chain: UPF0344 protein GK0697 (117 aa).

Transmembrane regions (helical) follow at residues 1 to 21, 39 to 59, 60 to 80, and 97 to 117; these read MTHA…LAVS, LFYI…ASIS, ALYW…EMVL, and VIAL…FDLF.

This sequence belongs to the UPF0344 family.

It localises to the cell membrane. This is UPF0344 protein GK0697 from Geobacillus kaustophilus (strain HTA426).